The chain runs to 1109 residues: Myosin ID heavy chain (1109 aa).

The 681-residue stretch at His7–Glu687 folds into the Myosin motor domain. Gly101–Thr108 serves as a coordination point for ATP. The segment at Ile564–Gly586 is actin-binding. Residues Lys725–Ala919 form the TH1 domain. An SH3 domain is found at Asn958–Asn1017. The segment at Asn1017 to Val1109 is disordered. Low complexity predominate over residues Thr1030 to Gly1043.

This sequence belongs to the TRAFAC class myosin-kinesin ATPase superfamily. Myosin family. Myosin I heavy chain is single-headed. Dimer of a heavy and a light chain. Inability to self-assemble into filaments.

The protein localises to the cell projection. Its subcellular location is the pseudopodium. The protein resides in the cytoplasm. It localises to the cell cortex. Functionally, myosin is a protein that binds to actin and has ATPase activity that is activated by actin. Myosin id may have a role in chemotaxis and aggregation; it could serve to stabilize and even retract cortical structures, such as pseudopods and lamellopods. Involved in the process of phagocytosis. This chain is Myosin ID heavy chain (myoD), found in Dictyostelium discoideum (Social amoeba).